We begin with the raw amino-acid sequence, 276 residues long: Undecaprenyl-diphosphatase 1 (276 aa).

The next 7 membrane-spanning stretches (helical) occupy residues 4 to 24 (ILIC…FLPV), 46 to 63 (TFDV…CWEY), 83 to 103 (FTLN…LFEK), 108 to 128 (VLFS…IILW), 187 to 207 (VATE…TLYE), 217 to 237 (VDSL…AFVC), and 252 to 272 (VFAW…YSGW).

This sequence belongs to the UppP family.

It localises to the cell inner membrane. It carries out the reaction di-trans,octa-cis-undecaprenyl diphosphate + H2O = di-trans,octa-cis-undecaprenyl phosphate + phosphate + H(+). Its function is as follows. Catalyzes the dephosphorylation of undecaprenyl diphosphate (UPP). Confers resistance to bacitracin. This is Undecaprenyl-diphosphatase 1 from Burkholderia lata (strain ATCC 17760 / DSM 23089 / LMG 22485 / NCIMB 9086 / R18194 / 383).